A 227-amino-acid chain; its full sequence is UPF0173 metal-dependent hydrolase BCB4264_A4722 (227 aa).

This sequence belongs to the UPF0173 family.

The chain is UPF0173 metal-dependent hydrolase BCB4264_A4722 from Bacillus cereus (strain B4264).